Consider the following 509-residue polypeptide: Mitogen-activated protein kinase sma-5 (509 aa).

Positions 19-72 are disordered; it reads DPITSMSPPQENRSPKAEYLNNFFNTNPTNGKSRGSQEAPRKPLGQTNLNVQGS. 2 stretches are compositionally biased toward polar residues: residues 20 to 30 and 40 to 54; these read PITSMSPPQEN and NFFN…SRGS. A Protein kinase domain is found at 105-411; it reads YEPTQNIGSG…IQDALLHPYI (307 aa). ATP contacts are provided by residues 111-119 and K134; that span reads IGSGAFGIV. Residue D231 is the Proton acceptor of the active site. The interval 460–482 is disordered; that stretch reads YSELHSGDSTGSTSDMSTNTSGE. Residues 466-481 show a composition bias toward low complexity; sequence GDSTGSTSDMSTNTSG.

It belongs to the protein kinase superfamily. CMGC Ser/Thr protein kinase family. MAP kinase subfamily. It depends on Mg(2+) as a cofactor. In terms of tissue distribution, expressed in intestine with a stronger expression in the four most anterior cells, muscles, excretory cell, pharynx and, to a lesser extent, in hypodermis.

It catalyses the reaction L-seryl-[protein] + ATP = O-phospho-L-seryl-[protein] + ADP + H(+). The enzyme catalyses L-threonyl-[protein] + ATP = O-phospho-L-threonyl-[protein] + ADP + H(+). In terms of biological role, serine/threonine-protein kinase involved in the postembryonic regulation of body size, mainly through control of cell growth. In particular, controls the volume of intestine, muscles and hypodermis. In addition, regulates growth, intestinal granule distribution, lifespan and number of offspring. This chain is Mitogen-activated protein kinase sma-5, found in Caenorhabditis elegans.